The following is a 533-amino-acid chain: GMP synthase [glutamine-hydrolyzing] (533 aa).

One can recognise a Glutamine amidotransferase type-1 domain in the interval 12-206; it reads TILVLDFGSQ…AVGICGAEQK (195 aa). Residue Cys88 is the Nucleophile of the active site. Catalysis depends on residues His180 and Glu182. The 202-residue stretch at 207 to 408 folds into the GMPS ATP-PPase domain; sequence WTMAEFIGQE…LGISPELVGR (202 aa). 235–241 is an ATP binding site; the sequence is SGGVDST. Residues Arg308, Asp470, Lys525, and Glu531 each coordinate XMP.

As to quaternary structure, homodimer. The cofactor is Mg(2+).

The protein localises to the cytoplasm. The protein resides in the cytosol. The enzyme catalyses XMP + L-glutamine + ATP + H2O = GMP + L-glutamate + AMP + diphosphate + 2 H(+). It participates in purine metabolism; GMP biosynthesis; GMP from XMP (L-Gln route): step 1/1. Its function is as follows. Catalyzes the conversion of xanthine monophosphate (XMP) to GMP in the presence of glutamine and ATP through an adenyl-XMP intermediate. In Emericella nidulans (strain FGSC A4 / ATCC 38163 / CBS 112.46 / NRRL 194 / M139) (Aspergillus nidulans), this protein is GMP synthase [glutamine-hydrolyzing] (gua1).